A 175-amino-acid polypeptide reads, in one-letter code: Ribosome maturation factor RimM (175 aa).

One can recognise a PRC barrel domain in the interval 93 to 167 (DDEFYYSDLI…YIIITLPEVI (75 aa)).

Belongs to the RimM family. In terms of assembly, binds ribosomal protein uS19.

The protein resides in the cytoplasm. An accessory protein needed during the final step in the assembly of 30S ribosomal subunit, possibly for assembly of the head region. Essential for efficient processing of 16S rRNA. May be needed both before and after RbfA during the maturation of 16S rRNA. It has affinity for free ribosomal 30S subunits but not for 70S ribosomes. The chain is Ribosome maturation factor RimM from Ehrlichia chaffeensis (strain ATCC CRL-10679 / Arkansas).